Here is a 107-residue protein sequence, read N- to C-terminus: Small ribosomal subunit protein uS10c (107 aa).

This sequence belongs to the universal ribosomal protein uS10 family. Part of the 30S ribosomal subunit.

Its subcellular location is the plastid. The protein localises to the chloroplast. Its function is as follows. Involved in the binding of tRNA to the ribosomes. This Thalassiosira pseudonana (Marine diatom) protein is Small ribosomal subunit protein uS10c.